The chain runs to 394 residues: NAD(P)H-quinone oxidoreductase subunit H (394 aa).

It belongs to the complex I 49 kDa subunit family. As to quaternary structure, NDH-1 can be composed of about 15 different subunits; different subcomplexes with different compositions have been identified which probably have different functions.

It is found in the cellular thylakoid membrane. The enzyme catalyses a plastoquinone + NADH + (n+1) H(+)(in) = a plastoquinol + NAD(+) + n H(+)(out). The catalysed reaction is a plastoquinone + NADPH + (n+1) H(+)(in) = a plastoquinol + NADP(+) + n H(+)(out). NDH-1 shuttles electrons from an unknown electron donor, via FMN and iron-sulfur (Fe-S) centers, to quinones in the respiratory and/or the photosynthetic chain. The immediate electron acceptor for the enzyme in this species is believed to be plastoquinone. Couples the redox reaction to proton translocation, and thus conserves the redox energy in a proton gradient. Cyanobacterial NDH-1 also plays a role in inorganic carbon-concentration. The protein is NAD(P)H-quinone oxidoreductase subunit H of Synechococcus sp. (strain CC9605).